A 110-amino-acid chain; its full sequence is Protein RALF-like 19 (110 aa).

The N-terminal stretch at 1–23 (MGIKILLILGLLTLAVVAESANA) is a signal peptide. A propeptide spans 24-58 (TWTLTKSCVNGQGCIGEDGELDYLMDSETNRRQLA) (removed in mature form). Cystine bridges form between cysteine 76-cysteine 86 and cysteine 99-cysteine 105.

Belongs to the plant rapid alkalinization factor (RALF) family. Post-translationally, proteolytically cleaved, probably by S1P, a subtilisin-like serine protease (subtilase).

The protein localises to the secreted. Cell signaling peptide that may regulate plant stress, growth, and development. Mediates a rapid alkalinization of extracellular space by mediating a transient increase in the cytoplasmic Ca(2+) concentration leading to a calcium-dependent signaling events through a cell surface receptor and a concomitant activation of some intracellular mitogen-activated protein kinases. The chain is Protein RALF-like 19 (RALFL19) from Arabidopsis thaliana (Mouse-ear cress).